Here is a 472-residue protein sequence, read N- to C-terminus: Protein DML1 (472 aa).

Residues 441 to 463 (GDEREEMKQELGDMASKYEHGWE) show a composition bias toward basic and acidic residues. A disordered region spans residues 441 to 472 (GDEREEMKQELGDMASKYEHGWEEESDDDDDY).

It belongs to the misato family.

The protein localises to the mitochondrion. In terms of biological role, involved in the partitioning of the mitochondrial organelle and mitochondrial DNA (mtDNA) inheritance. The protein is Protein DML1 (DML1) of Yarrowia lipolytica (strain CLIB 122 / E 150) (Yeast).